We begin with the raw amino-acid sequence, 272 residues long: Deaminated glutathione amidase (272 aa).

The CN hydrolase domain occupies 1-253 (MKPYLAAALQ…PGLAIAEINP (253 aa)). E43 serves as the catalytic Proton acceptor. K115 (proton donor) is an active-site residue. Catalysis depends on C158, which acts as the Nucleophile.

Belongs to the carbon-nitrogen hydrolase superfamily. NIT1/NIT2 family.

The catalysed reaction is N-(4-oxoglutaryl)-L-cysteinylglycine + H2O = L-cysteinylglycine + 2-oxoglutarate. In terms of biological role, hydrolyzes deaminated glutathione (dGSH, 2-oxoglutaramate) to alpha-ketoglutarate (alpha-KG) and cysteinylglycine (specific activity 7.77 umol/min/mg), hydrolyzes alpha-ketoglutaramate (a-KGM, specific activity 2.13 umol/min/mg), has no activity on glutathione or L-glutamine. May function as a metabolite repair enzyme. In Synechocystis sp. (strain PCC 6803 / GT-S), this protein is Deaminated glutathione amidase.